Consider the following 89-residue polypeptide: Small ribosomal subunit protein uS14 (89 aa).

Belongs to the universal ribosomal protein uS14 family. As to quaternary structure, part of the 30S ribosomal subunit. Contacts proteins S3 and S10.

Its function is as follows. Binds 16S rRNA, required for the assembly of 30S particles and may also be responsible for determining the conformation of the 16S rRNA at the A site. The sequence is that of Small ribosomal subunit protein uS14 from Latilactobacillus sakei subsp. sakei (strain 23K) (Lactobacillus sakei subsp. sakei).